Consider the following 417-residue polypeptide: Aromatic-amino-acid aminotransferase 1 (417 aa).

Position 258 is an N6-(pyridoxal phosphate)lysine (K258).

The protein belongs to the class-I pyridoxal-phosphate-dependent aminotransferase family. As to quaternary structure, homodimer. Pyridoxal 5'-phosphate serves as cofactor.

It catalyses the reaction an aromatic L-alpha-amino acid + 2-oxoglutarate = an aromatic oxo-acid + L-glutamate. In terms of biological role, catalyzes the transamination of phenylalanine, tyrosine and tryptophan. Shows virtually no activity towards aspartic acid, alanine, valine or isoleucine. This is Aromatic-amino-acid aminotransferase 1 from Thermococcus litoralis (strain ATCC 51850 / DSM 5473 / JCM 8560 / NS-C).